Here is a 430-residue protein sequence, read N- to C-terminus: Enolase (430 aa).

Position 165 (glutamine 165) interacts with (2R)-2-phosphoglycerate. The active-site Proton donor is the glutamate 207. The Mg(2+) site is built by aspartate 244, glutamate 287, and aspartate 314. The (2R)-2-phosphoglycerate site is built by lysine 339, arginine 368, serine 369, and lysine 390. Lysine 339 (proton acceptor) is an active-site residue.

It belongs to the enolase family. Component of the RNA degradosome, a multiprotein complex involved in RNA processing and mRNA degradation. The cofactor is Mg(2+).

It is found in the cytoplasm. The protein resides in the secreted. Its subcellular location is the cell surface. It carries out the reaction (2R)-2-phosphoglycerate = phosphoenolpyruvate + H2O. It functions in the pathway carbohydrate degradation; glycolysis; pyruvate from D-glyceraldehyde 3-phosphate: step 4/5. In terms of biological role, catalyzes the reversible conversion of 2-phosphoglycerate (2-PG) into phosphoenolpyruvate (PEP). It is essential for the degradation of carbohydrates via glycolysis. This Xanthomonas oryzae pv. oryzae (strain MAFF 311018) protein is Enolase.